The chain runs to 385 residues: tRNA pseudouridine synthase D (385 aa).

Asp-86 functions as the Nucleophile in the catalytic mechanism. The TRUD domain maps to 165 to 305 (GFPNYFGNQR…TRFLQKDIAP (141 aa)).

This sequence belongs to the pseudouridine synthase TruD family.

It catalyses the reaction uridine(13) in tRNA = pseudouridine(13) in tRNA. Responsible for synthesis of pseudouridine from uracil-13 in transfer RNAs. The protein is tRNA pseudouridine synthase D of Helicobacter hepaticus (strain ATCC 51449 / 3B1).